The following is a 276-amino-acid chain: Glucosamine-6-phosphate deaminase 2 (276 aa).

The Proton acceptor; for enolization step role is filled by Asp72. Positions 105 to 130 form a coiled coil; sequence HILDGNAADLQAECDAFENKIKEAGG. Residue Asp141 is the For ring-opening step of the active site. The active-site Proton acceptor; for ring-opening step is His143. The active-site For ring-opening step is the Glu148. At Thr161 the chain carries Phosphothreonine.

The protein belongs to the glucosamine/galactosamine-6-phosphate isomerase family. As to quaternary structure, homohexamer. As to expression, ubiquitous, with highest expression detected in testis, ovary, placenta, and heart.

Its subcellular location is the cytoplasm. The enzyme catalyses alpha-D-glucosamine 6-phosphate + H2O = beta-D-fructose 6-phosphate + NH4(+). It participates in nucleotide-sugar biosynthesis; UDP-N-acetyl-alpha-D-glucosamine biosynthesis; alpha-D-glucosamine 6-phosphate from D-fructose 6-phosphate: step 1/1. With respect to regulation, allosterically activated by N-acetylglucosamine-6-phosphate (GlcNAc6P). In terms of biological role, catalyzes the reversible conversion of alpha-D-glucosamine 6-phosphate (GlcN-6P) into beta-D-fructose 6-phosphate (Fru-6P) and ammonium ion, a regulatory reaction step in de novo uridine diphosphate-N-acetyl-alpha-D-glucosamine (UDP-GlcNAc) biosynthesis via hexosamine pathway. Deamination is coupled to aldo-keto isomerization mediating the metabolic flux from UDP-GlcNAc toward Fru-6P. At high ammonium level can drive amination and isomerization of Fru-6P toward hexosamines and UDP-GlcNAc synthesis. Has a role in fine tuning the metabolic fluctuations of cytosolic UDP-GlcNAc and their effects on hyaluronan synthesis that occur during tissue remodeling. In Homo sapiens (Human), this protein is Glucosamine-6-phosphate deaminase 2.